The sequence spans 402 residues: Multidrug resistance protein MdtH (402 aa).

A run of 10 helical transmembrane segments spans residues 13 to 33 (YFLL…FPLI), 34 to 54 (SIRF…ALGL), 99 to 116 (PWIL…GTLF), 139 to 159 (LLMM…SWLL), 165 to 185 (YVCW…AWLL), 214 to 234 (VLTL…LPIM), 244 to 264 (AVKW…YPIA), 277 to 297 (LMFG…STTL), 340 to 360 (LGLA…YDMG), and 368 to 388 (LPWA…YWQF).

Belongs to the major facilitator superfamily. DHA1 family. MdtH (TC 2.A.1.2.21) subfamily.

Its subcellular location is the cell inner membrane. This chain is Multidrug resistance protein MdtH, found in Edwardsiella ictaluri (strain 93-146).